The sequence spans 372 residues: tRNA pseudouridine synthase D (372 aa).

The Nucleophile role is filled by Asp85. One can recognise a TRUD domain in the interval 160-330 (GFANYFGYQR…MQGSRRFMWG (171 aa)).

The protein belongs to the pseudouridine synthase TruD family.

It carries out the reaction uridine(13) in tRNA = pseudouridine(13) in tRNA. Responsible for synthesis of pseudouridine from uracil-13 in transfer RNAs. This chain is tRNA pseudouridine synthase D, found in Campylobacter jejuni subsp. jejuni serotype O:2 (strain ATCC 700819 / NCTC 11168).